A 511-amino-acid chain; its full sequence is Maturase K (511 aa).

The protein belongs to the intron maturase 2 family. MatK subfamily.

The protein localises to the plastid. It is found in the chloroplast. Its function is as follows. Usually encoded in the trnK tRNA gene intron. Probably assists in splicing its own and other chloroplast group II introns. The protein is Maturase K of Oryza nivara (Indian wild rice).